The primary structure comprises 129 residues: Large ribosomal subunit protein uL22 (129 aa).

This sequence belongs to the universal ribosomal protein uL22 family. In terms of assembly, part of the 50S ribosomal subunit.

In terms of biological role, this protein binds specifically to 23S rRNA; its binding is stimulated by other ribosomal proteins, e.g. L4, L17, and L20. It is important during the early stages of 50S assembly. It makes multiple contacts with different domains of the 23S rRNA in the assembled 50S subunit and ribosome. The globular domain of the protein is located near the polypeptide exit tunnel on the outside of the subunit, while an extended beta-hairpin is found that lines the wall of the exit tunnel in the center of the 70S ribosome. In Agrobacterium fabrum (strain C58 / ATCC 33970) (Agrobacterium tumefaciens (strain C58)), this protein is Large ribosomal subunit protein uL22.